The primary structure comprises 130 residues: Small ribosomal subunit protein uS11 (130 aa).

It belongs to the universal ribosomal protein uS11 family. In terms of assembly, part of the 30S ribosomal subunit. Interacts with proteins S7 and S18. Binds to IF-3.

Functionally, located on the platform of the 30S subunit, it bridges several disparate RNA helices of the 16S rRNA. Forms part of the Shine-Dalgarno cleft in the 70S ribosome. This Helicobacter hepaticus (strain ATCC 51449 / 3B1) protein is Small ribosomal subunit protein uS11.